Reading from the N-terminus, the 303-residue chain is Uricase (303 aa).

N-acetylalanine is present on Ala2. 2 positions are modified to N6-acetyllysine; alternate: Lys10 and Lys23. Lys10 and Lys23 each carry N6-succinyllysine; alternate. Lys23 serves as the catalytic Charge relay system. An N6-acetyllysine mark is found at Lys27 and Lys36. Residues Ser39 and Ser63 each carry the phosphoserine modification. Thr68 serves as the catalytic Charge relay system. Urate contacts are provided by Thr68 and Asp69. An N6-acetyllysine mark is found at Lys118, Lys122, and Lys164. Residue Phe170 participates in urate binding. N6-acetyllysine is present on residues Lys175 and Lys185. Position 187 (Arg187) interacts with urate. At Lys220 the chain carries N6-acetyllysine; alternate. Position 220 is an N6-succinyllysine; alternate (Lys220). Position 231 is a phosphoserine (Ser231). Positions 234, 235, and 261 each coordinate urate. Residue His263 is the Charge relay system of the active site. Residue Lys277 is modified to N6-acetyllysine. Tyr288 is subject to Phosphotyrosine. The Microbody targeting signal motif lies at 301–303 (SRL).

It belongs to the uricase family. As to expression, expressed in liver. Not detected in other tissues tested.

It is found in the peroxisome. It carries out the reaction urate + O2 + H2O = 5-hydroxyisourate + H2O2. Its pathway is purine metabolism; urate degradation; (S)-allantoin from urate: step 1/3. Competitively inhibited by xanthine. Functionally, catalyzes the oxidation of uric acid to 5-hydroxyisourate, which is further processed to form (S)-allantoin. This is Uricase (Uox) from Rattus norvegicus (Rat).